Reading from the N-terminus, the 456-residue chain is Ribonuclease inhibitor (456 aa).

Met1 is modified (N-acetylmethionine). LRR repeat units follow at residues 15 to 43 (WTEL…CKDI), 44 to 71 (SSAV…VGLV), 72 to 100 (LQGL…CGIL), 101 to 128 (PGML…LKLL), 129 to 157 (CEGL…CEPL), 158 to 185 (ASVL…VRIL), 186 to 214 (CQGL…CKDL), 215 to 242 (CDVV…IAAL), 243 to 271 (CPGL…CKDL), 272 to 299 (CRVL…ARLL), 300 to 328 (CESL…CPYF), 329 to 356 (CSVL…VQEL), 357 to 385 (CKAL…CSSL), 386 to 413 (ANVL…VLQL), and 414 to 442 (LESL…EEQL). Position 86 is a phosphoserine (Ser86).

Forms high-affinity heterodimers with RNASE1, ANG and RNASE2.

Its subcellular location is the cytoplasm. The protein localises to the nucleus. In terms of biological role, ribonuclease inhibitor which inhibits RNASE1, RNASE2 and angiogenin (ANG). May play a role in redox homeostasis. Required to inhibit the cytotoxic tRNA ribonuclease activity of ANG in the cytoplasm in absence of stress. Relocates to the nucleus in response to stress, relieving inhibition of ANG in the cytoplasm, and inhibiting the angiogenic activity of ANG in the nucleus. The chain is Ribonuclease inhibitor (Rnh1) from Mus musculus (Mouse).